Reading from the N-terminus, the 230-residue chain is Large ribosomal subunit protein uL1 (230 aa).

Belongs to the universal ribosomal protein uL1 family. Part of the 50S ribosomal subunit.

Binds directly to 23S rRNA. The L1 stalk is quite mobile in the ribosome, and is involved in E site tRNA release. Its function is as follows. Protein L1 is also a translational repressor protein, it controls the translation of the L11 operon by binding to its mRNA. The polypeptide is Large ribosomal subunit protein uL1 (Bacillus cereus (strain B4264)).